The chain runs to 128 residues: Fluoride-specific ion channel FluC (128 aa).

4 consecutive transmembrane segments (helical) span residues 5 to 25 (IVAI…LSLA), 35 to 55 (LGTL…AVVF), 67 to 87 (LFVI…SVEV), and 96 to 116 (FGWA…LTAL). Na(+)-binding residues include Gly75 and Thr78.

This sequence belongs to the fluoride channel Fluc/FEX (TC 1.A.43) family.

The protein localises to the cell inner membrane. It catalyses the reaction fluoride(in) = fluoride(out). With respect to regulation, na(+) is not transported, but it plays an essential structural role and its presence is essential for fluoride channel function. Functionally, fluoride-specific ion channel. Important for reducing fluoride concentration in the cell, thus reducing its toxicity. The polypeptide is Fluoride-specific ion channel FluC (Burkholderia lata (strain ATCC 17760 / DSM 23089 / LMG 22485 / NCIMB 9086 / R18194 / 383)).